The primary structure comprises 214 residues: Transcription factor 23 (214 aa).

2 disordered regions span residues 1-86 and 174-214; these read MSQR…ARER and DSTT…LGDK. Over residues 40-49 the composition is skewed to basic and acidic residues; that stretch reads TRQDPWEERS. In terms of domain architecture, bHLH spans 76 to 128; it reads EASPENAARERSRVRTLRQAFLALQAALPAVPPDTKLSKLDVLVLAASYIAHL. Over residues 174–183 the composition is skewed to polar residues; that stretch reads DSTTASTPSQ.

In terms of assembly, forms inactive heterodimeric complexes with TCF3. As to expression, expressed in liver, kidney and spleen.

The protein localises to the nucleus. In terms of biological role, inhibits E-box-mediated binding and transactivation of bHLH factors. Inhibitory effect is similar to that of ID proteins. Inhibits the formation of TCF3 and MYOD1 homodimers and heterodimers. Lacks DNA binding activity. Seems to play a role in the inhibition of myogenesis. The chain is Transcription factor 23 (TCF23) from Homo sapiens (Human).